The sequence spans 288 residues: Bis(5'-nucleosyl)-tetraphosphatase, symmetrical (288 aa).

This sequence belongs to the Ap4A hydrolase family.

The catalysed reaction is P(1),P(4)-bis(5'-adenosyl) tetraphosphate + H2O = 2 ADP + 2 H(+). Hydrolyzes diadenosine 5',5'''-P1,P4-tetraphosphate to yield ADP. In Baumannia cicadellinicola subsp. Homalodisca coagulata, this protein is Bis(5'-nucleosyl)-tetraphosphatase, symmetrical.